Reading from the N-terminus, the 560-residue chain is Beta-glucosidase 26, peroxisomal (560 aa).

Residues glutamine 33, histidine 137, 182–183 (NE), tyrosine 326, glutamate 398, tryptophan 450, 457–458 (EW), and tyrosine 466 contribute to the a beta-D-glucoside site. Glutamate 183 (proton donor) is an active-site residue. The active-site Nucleophile is the glutamate 398.

Belongs to the glycosyl hydrolase 1 family.

The protein localises to the peroxisome. The enzyme catalyses Hydrolysis of terminal, non-reducing beta-D-glucosyl residues with release of beta-D-glucose.. In terms of biological role, possesses beta-glucosidase activity toward 4-methyl-umbelliferyl-beta-D-glucoside in vitro. Possesses myrosinase activity toward indol-3-yl-methylglucosinolate (I3M) and 4-methoxy-indol-3-yl-methylglucosinolate (4MO-I3M) in vivo. Component of an inducible preinvasion resistance mechanism that prevents penetration of the nonhost fungal species B.graminis and E.pisi. Involved in indole glucosinolate (IGS) activation during pattern-triggered immunity (PTI). Functions as a myrosinase for the breakdown of flg22-triggered IGS. Required for both callose deposition and glucosinolate activation during pathogen-triggered resistance. During fungal attack, required for IGS activation that mediates broad-spectrum antifungal defense. The protein is Beta-glucosidase 26, peroxisomal of Arabidopsis thaliana (Mouse-ear cress).